A 112-amino-acid chain; its full sequence is uncharacterized protein (112 aa).

The segment at 90–112 is disordered; that stretch reads KNFNNSKNDQIKKKKIDNNQVNL.

This is an uncharacterized protein from Buchnera aphidicola subsp. Acyrthosiphon pisum (strain APS) (Acyrthosiphon pisum symbiotic bacterium).